A 477-amino-acid polypeptide reads, in one-letter code: MKVTLPEFERAGVMVVGDVMLDRYWYGPTSRISPEAPVPVVKVNTIEERPGGAANVAMNIASLGANARLVGLTGIDDAARALSKSLADVNVKCDFVSVPTHPTITKLRVLSRNQQLIRLDFEEGFEGVDPQPLHERINQALSSIGALVLSDYAKGALASVQQMIQLARKAGVPVLIDPKGTDFERYRGATLLTPNLSEFEAVVGKCKTEEEIVERGMKLIADYELSALLVTRSEQGMSLLQPGKAPLHMPTQAQEVYDVTGAGDTVIGVLAATLAAGNSLEEACFFANAAAGVVVGKLGTSTVSPIELENAVRGRADTGFGVMTEEELKLAVAAARKRGEKVVMTNGVFDILHAGHVSYLANARKLGDRLIVAVNSDASTKRLKGDSRPVNPLEQRMIVLGALEAVDWVVSFEEDTPQRLIAGILPDLLVKGGDYKPEEIAGSKEVWANGGEVLVLNFEDGCSTTNIIKKIQQDKKG.

The ribokinase stretch occupies residues Met-1–Thr-318. Residue Lys-179 is modified to N6-acetyllysine. Asn-195 to Glu-198 serves as a coordination point for ATP. Asp-264 is a catalytic residue. A cytidylyltransferase region spans residues Met-344–Gly-477.

It in the N-terminal section; belongs to the carbohydrate kinase PfkB family. In the C-terminal section; belongs to the cytidylyltransferase family. Homodimer.

It catalyses the reaction D-glycero-beta-D-manno-heptose 7-phosphate + ATP = D-glycero-beta-D-manno-heptose 1,7-bisphosphate + ADP + H(+). The enzyme catalyses D-glycero-beta-D-manno-heptose 1-phosphate + ATP + H(+) = ADP-D-glycero-beta-D-manno-heptose + diphosphate. It participates in nucleotide-sugar biosynthesis; ADP-L-glycero-beta-D-manno-heptose biosynthesis; ADP-L-glycero-beta-D-manno-heptose from D-glycero-beta-D-manno-heptose 7-phosphate: step 1/4. It functions in the pathway nucleotide-sugar biosynthesis; ADP-L-glycero-beta-D-manno-heptose biosynthesis; ADP-L-glycero-beta-D-manno-heptose from D-glycero-beta-D-manno-heptose 7-phosphate: step 3/4. Functionally, catalyzes the phosphorylation of D-glycero-D-manno-heptose 7-phosphate at the C-1 position to selectively form D-glycero-beta-D-manno-heptose-1,7-bisphosphate. Its function is as follows. Catalyzes the ADP transfer from ATP to D-glycero-beta-D-manno-heptose 1-phosphate, yielding ADP-D-glycero-beta-D-manno-heptose. This is Bifunctional protein HldE from Escherichia coli (strain 55989 / EAEC).